Consider the following 375-residue polypeptide: Protein RecA (375 aa).

88–95 (GPESSGKT) lines the ATP pocket.

Belongs to the RecA family.

The protein resides in the cytoplasm. In terms of biological role, can catalyze the hydrolysis of ATP in the presence of single-stranded DNA, the ATP-dependent uptake of single-stranded DNA by duplex DNA, and the ATP-dependent hybridization of homologous single-stranded DNAs. It interacts with LexA causing its activation and leading to its autocatalytic cleavage. In Rhodopirellula baltica (strain DSM 10527 / NCIMB 13988 / SH1), this protein is Protein RecA.